A 128-amino-acid chain; its full sequence is Large ribosomal subunit protein bL12 (128 aa).

It belongs to the bacterial ribosomal protein bL12 family. Homodimer. Part of the ribosomal stalk of the 50S ribosomal subunit. Forms a multimeric L10(L12)X complex, where L10 forms an elongated spine to which 2 to 4 L12 dimers bind in a sequential fashion. Binds GTP-bound translation factors.

Forms part of the ribosomal stalk which helps the ribosome interact with GTP-bound translation factors. Is thus essential for accurate translation. This is Large ribosomal subunit protein bL12 from Corynebacterium efficiens (strain DSM 44549 / YS-314 / AJ 12310 / JCM 11189 / NBRC 100395).